Reading from the N-terminus, the 120-residue chain is Large ribosomal subunit protein uL18 (120 aa).

This sequence belongs to the universal ribosomal protein uL18 family. As to quaternary structure, part of the 50S ribosomal subunit; part of the 5S rRNA/L5/L18/L25 subcomplex. Contacts the 5S and 23S rRNAs.

In terms of biological role, this is one of the proteins that bind and probably mediate the attachment of the 5S RNA into the large ribosomal subunit, where it forms part of the central protuberance. In Rhizobium johnstonii (strain DSM 114642 / LMG 32736 / 3841) (Rhizobium leguminosarum bv. viciae), this protein is Large ribosomal subunit protein uL18.